The primary structure comprises 89 residues: Small ribosomal subunit protein uS14 (89 aa).

It belongs to the universal ribosomal protein uS14 family. Part of the 30S ribosomal subunit. Contacts proteins S3 and S10.

Functionally, binds 16S rRNA, required for the assembly of 30S particles and may also be responsible for determining the conformation of the 16S rRNA at the A site. This is Small ribosomal subunit protein uS14 from Azobacteroides pseudotrichonymphae genomovar. CFP2.